The sequence spans 416 residues: MTRKYIYIYIYIILKVRARVGANNKTLINNQSHLIEMRNTLMLSDLPGDLLEEILCRVPATSLKQLRSTCKQWNNLFNNGRFTRKHLDKAPKDFQNLMLSDSRVFSMSVSFHGIPSVEATCELSLIDSFSSFEDKFEISQVFHCDGLLLCTDADNTRIVVWNPCTGKTRWIEPNNRCYYYAFGSYLDKSYGNSYKILSYSGYGYENQELAIYEINSQSWRFLDVTRDCILERYTDYGVSLKGHTYWFASDEKEKNLSVFLVSFDYTTERFRRLRLPYQCPDYNTASLSVVREEKLAVLLQRENTSRTEIWVTSRIGETKVVSWSMVLAVDFPSELFILSGISFLVDAEKKFVVCCDNYFGEDEYDTKNLVHIVGENNKVREVNFGVSESSWPFLFNYVPSLIQIWEGVGGKRKRVE.

In terms of domain architecture, F-box spans 40–86 (TLMLSDLPGDLLEEILCRVPATSLKQLRSTCKQWNNLFNNGRFTRKH).

The polypeptide is Probable F-box protein At5g47300 (Arabidopsis thaliana (Mouse-ear cress)).